A 75-amino-acid chain; its full sequence is UPF0291 protein Teth39_0326 (75 aa).

Belongs to the UPF0291 family.

The protein resides in the cytoplasm. The chain is UPF0291 protein Teth39_0326 from Thermoanaerobacter pseudethanolicus (strain ATCC 33223 / 39E) (Clostridium thermohydrosulfuricum).